Here is a 486-residue protein sequence, read N- to C-terminus: MERSSSSSSSSCDKVWNLGLPYPTFTLANDDKPYLITVSDDHSVKVKNVDWISKLPDDVLLIILSRLSTEEAIRTSVVSKRWEHVWNQMSHLVFDMRKNIINSNNTLDGSNPVATLITQVINNHRGHLESCVIIHVPYQGGNGMLNSWIRLLSCVKRTKVLTLRYHYGTWDRKFKTFNFSPDSLSHPSLMSLSLHSYFLESSHPLRNCSNLRTLKLLSIVAPEIGVFNRVLASCPCLEVLVLGICCFKKSRVPLKIENKKLKLLQVSSLERIDAIEVSTTSLDILAIIDICCRRDDLSLQSPQLQFNRNFWVLGPYVPHISYNISEEKSIGNEEFVNTIYGELLRPFANLYVALSVSVDLMNPTEVERLRQVLGLWTRKILELEIIFKDNNGPREENKSWDKKLWEDNNKKDPFPNAKFRVDTVWMYNFSGSEEEFALMTCLIRQGTVVEKMMIKTSTFPARKRLKIEAAVAKLQALQTKLTIKCF.

Residues 49–97 form the F-box domain; it reads VDWISKLPDDVLLIILSRLSTEEAIRTSVVSKRWEHVWNQMSHLVFDMR.

The protein is F-box protein At1g80960 of Arabidopsis thaliana (Mouse-ear cress).